The sequence spans 55 residues: Large ribosomal subunit protein bL33 (55 aa).

A compositionally biased stretch (basic and acidic residues) spans 1–10 (MAKGGREKIK). The tract at residues 1–27 (MAKGGREKIKLQSTAGTGHFYTTDKNK) is disordered.

The protein belongs to the bacterial ribosomal protein bL33 family.

The polypeptide is Large ribosomal subunit protein bL33 (Polaromonas naphthalenivorans (strain CJ2)).